We begin with the raw amino-acid sequence, 331 residues long: Adenosine deaminase (331 aa).

Residues H12 and H14 each contribute to the Zn(2+) site. Residues H14, D16, and G170 each coordinate substrate. Zn(2+) is bound at residue H197. The active-site Proton donor is the E200. Position 278 (D278) interacts with Zn(2+). Position 279 (D279) interacts with substrate.

Belongs to the metallo-dependent hydrolases superfamily. Adenosine and AMP deaminases family. Adenosine deaminase subfamily. The cofactor is Zn(2+).

It carries out the reaction adenosine + H2O + H(+) = inosine + NH4(+). It catalyses the reaction 2'-deoxyadenosine + H2O + H(+) = 2'-deoxyinosine + NH4(+). Its function is as follows. Catalyzes the hydrolytic deamination of adenosine and 2-deoxyadenosine. The chain is Adenosine deaminase from Shewanella oneidensis (strain ATCC 700550 / JCM 31522 / CIP 106686 / LMG 19005 / NCIMB 14063 / MR-1).